We begin with the raw amino-acid sequence, 166 residues long: Cold-inducible RNA-binding protein (166 aa).

An RRM domain is found at 6–84 (GKLFVGGLNF…RQIRVDQAGK (79 aa)). Positions 68 to 166 (NGKSVDGRQI…DSYDSYTTQE (99 aa)) are disordered. Residues 93–120 (YRGGSSGGRGFFRGGRGRGGGGDRGYGG) are compositionally biased toward gly residues. Residues 121–166 (SSRFENRSGGYQSSGSRDYYGRSHGSYGDRSGGSYRDSYDSYTTQE) show a composition bias toward low complexity.

In terms of assembly, interacts with prmt1. Interacts with elavl1/elrA (via RRM3). Associates with ribosomes. Methylated on arginine residues within RGG motifs. Methylation by prmt1 promotes cytoplasmic accumulation.

The protein localises to the nucleus. It localises to the nucleoplasm. The protein resides in the cytoplasm. Its function is as follows. Cold-inducible mRNA binding protein. Acts cooperatively with elavl1/elrA to stabilize AU-rich element (ARE)-containing mRNAs by binding to themm and inhibiting their deadenylation. Essential for embryonic gastrulation and neural development, acting to maintain the expression of a set of adhesion molecules, and cell movement during embryogenesis. Required for pronephros development. The sequence is that of Cold-inducible RNA-binding protein from Xenopus tropicalis (Western clawed frog).